Here is a 383-residue protein sequence, read N- to C-terminus: Transposase InsI for insertion sequence element IS30A (383 aa).

The region spanning Val-213–Val-379 is the Integrase catalytic domain.

Belongs to the transposase IS30 family.

Functionally, required for the transposition of the insertion element. This is Transposase InsI for insertion sequence element IS30A (insI1) from Escherichia coli (strain K12).